The chain runs to 368 residues: L-arabinitol 4-dehydrogenase (368 aa).

The Zn(2+) site is built by cysteine 52, histidine 77, glutamate 78, cysteine 107, cysteine 110, cysteine 113, cysteine 121, and glutamate 162. NAD(+) is bound by residues aspartate 210, arginine 215, and isoleucine 282.

This sequence belongs to the zinc-containing alcohol dehydrogenase family. In terms of assembly, homotetramer. The cofactor is Zn(2+).

The enzyme catalyses L-arabinitol + NAD(+) = L-xylulose + NADH + H(+). Functionally, plays a key role in liamocins biosynthesis by providing the arabinol moity that is linked to 3,5-dihydroxydecanoic acid (provided by the HR-PKS PKS1) via ester bond formation catalyzed by the esterase EST1. This is L-arabinitol 4-dehydrogenase from Aureobasidium melanogenum (Aureobasidium pullulans var. melanogenum).